The sequence spans 473 residues: Sulfate adenylyltransferase subunit 1 (473 aa).

The 220-residue stretch at 19–238 (KTLLKFLTCG…IKIKNSISSE (220 aa)) folds into the tr-type G domain. The interval 28 to 35 (GSVDDGKS) is G1. 28–35 (GSVDDGKS) lines the GTP pocket. The tract at residues 86–90 (GITID) is G2. The interval 107-110 (DTPG) is G3. GTP is bound by residues 107–111 (DTPGH) and 162–165 (NKMD). The G4 stretch occupies residues 162–165 (NKMD). The G5 stretch occupies residues 200–202 (SAL).

Belongs to the TRAFAC class translation factor GTPase superfamily. Classic translation factor GTPase family. CysN/NodQ subfamily. In terms of assembly, heterodimer composed of CysD, the smaller subunit, and CysN.

The catalysed reaction is sulfate + ATP + H(+) = adenosine 5'-phosphosulfate + diphosphate. Its pathway is sulfur metabolism; hydrogen sulfide biosynthesis; sulfite from sulfate: step 1/3. Its function is as follows. With CysD forms the ATP sulfurylase (ATPS) that catalyzes the adenylation of sulfate producing adenosine 5'-phosphosulfate (APS) and diphosphate, the first enzymatic step in sulfur assimilation pathway. APS synthesis involves the formation of a high-energy phosphoric-sulfuric acid anhydride bond driven by GTP hydrolysis by CysN coupled to ATP hydrolysis by CysD. This chain is Sulfate adenylyltransferase subunit 1, found in Buchnera aphidicola subsp. Acyrthosiphon pisum (strain Tuc7).